We begin with the raw amino-acid sequence, 563 residues long: Arginine--tRNA ligase (563 aa).

The 'HIGH' region signature appears at proline 120 to histidine 130.

Belongs to the class-I aminoacyl-tRNA synthetase family. Monomer.

Its subcellular location is the cytoplasm. It catalyses the reaction tRNA(Arg) + L-arginine + ATP = L-arginyl-tRNA(Arg) + AMP + diphosphate. In Clostridium botulinum (strain Alaska E43 / Type E3), this protein is Arginine--tRNA ligase.